Consider the following 301-residue polypeptide: Probable alpha-L-glutamate ligase (301 aa).

Residues 104 to 287 (LQLLSRRGIG…VAGIIIEHLE (184 aa)) enclose the ATP-grasp domain. ATP is bound by residues Lys141, 178–179 (EY), Asp187, and 211–213 (RSN). Mg(2+) contacts are provided by Asp248, Glu260, and Asn262. Mn(2+) contacts are provided by Asp248, Glu260, and Asn262.

It belongs to the RimK family. It depends on Mg(2+) as a cofactor. Mn(2+) serves as cofactor.

This is Probable alpha-L-glutamate ligase from Pseudomonas fluorescens (strain SBW25).